The primary structure comprises 452 residues: Na(+)/H(+) antiporter NhaA (452 aa).

11 helical membrane passes run 23-43 (MMLF…LSTI), 71-91 (LLQF…GLEI), 108-128 (LPIV…LLVV), 136-156 (GAAI…AVLG), 165-185 (VFLT…IALF), 189-209 (HINI…YLMG), 216-236 (LGLY…SGIH), 316-336 (IVGY…TLGG), 349-369 (VFLG…YGFV), 385-405 (LMAV…IATL), and 418-438 (EAKL…IVTL).

The protein belongs to the NhaA Na(+)/H(+) (TC 2.A.33) antiporter family.

It localises to the cell inner membrane. It catalyses the reaction Na(+)(in) + 2 H(+)(out) = Na(+)(out) + 2 H(+)(in). Functionally, na(+)/H(+) antiporter that extrudes sodium in exchange for external protons. This chain is Na(+)/H(+) antiporter NhaA, found in Porphyromonas gingivalis (strain ATCC BAA-308 / W83).